A 279-amino-acid chain; its full sequence is Alcohol dehydrogenase-related 31 kDa protein (279 aa).

NAD(+) is bound at residue 11–34; that stretch reads YVADCGGIALETSKVLMTKNIAKL. Serine 139 is a substrate binding site. Tyrosine 152 serves as the catalytic Proton acceptor.

It belongs to the short-chain dehydrogenases/reductases (SDR) family.

In Drosophila guanche (Fruit fly), this protein is Alcohol dehydrogenase-related 31 kDa protein (Adhr).